The sequence spans 349 residues: Hypoxia-inducible factor 1-alpha inhibitor (349 aa).

Residues 1–14 (MAATAAEVAASGSG) are compositionally biased toward low complexity. The segment at 1 to 51 (MAATAAEVAASGSGEAREEAEAPGPAWDESQLRSYSFPTRPIPRLSQSDPR) is disordered. An N-acetylalanine modification is found at Ala-2. The interaction with VHL stretch occupies residues 2–125 (AATAAEVAAS…PRSNREEIKF (124 aa)). The 166-residue stretch at 142-307 (ERLYLQQTLN…KGAPTPKRIE (166 aa)) folds into the JmjC domain. Tyr-145 is a binding site for 2-oxoglutarate. Substrate contacts are provided by residues Asp-152 and 181-183 (QLT). Position 196 (Thr-196) interacts with 2-oxoglutarate. Residues His-199 and Asp-201 each coordinate Fe cation. 201–203 (DEQ) is a substrate binding site. 2-oxoglutarate is bound by residues Asn-205 and Lys-214. 238–239 (RQ) serves as a coordination point for substrate. Fe cation is bound at residue His-279. Asn-294 is a 2-oxoglutarate binding site. Positions 300 and 321 each coordinate substrate.

As to quaternary structure, homodimer; homodimerization is essential for catalytic activity. Interacts with VHL and HIF1A. Part of a complex with VHL, HIF1A and HDAC1 or HDAC2 or HDAC3. Interacts with NFKB1 and NFKBIA. Interacts with NOTCH1, NOTCH2 and NOTCH3 but not with NOTCH4. Interacts with ABPA3. Interacts with TNKS2. Interacts with PPP1R12A. Interacts with UBE3A. Interacts with ASB4. Interacts with ANKS3. Interacts with NECAB3; the interaction is indirect and seems to be mediated by APBA3. The cofactor is Fe(2+).

The protein localises to the nucleus. Its subcellular location is the cytoplasm. The protein resides in the perinuclear region. It catalyses the reaction L-asparaginyl-[hypoxia-inducible factor alpha subunit] + 2-oxoglutarate + O2 = (3S)-3-hydroxy-L-asparaginyl-[hypoxia-inducible factor alpha subunit] + succinate + CO2. The catalysed reaction is L-histidyl-[ankyrin-repeat domain protein] + 2-oxoglutarate + O2 = (3S)-3-hydroxy-L-histidyl-[ankyrin-repeat domain protein] + succinate + CO2. It carries out the reaction L-asparaginyl-[ankyrin-repeat domain protein] + 2-oxoglutarate + O2 = (3S)-3-hydroxy-L-asparaginyl-[ankyrin-repeat domain protein] + succinate + CO2. The enzyme catalyses L-aspartyl-[ankyrin-repeat domain protein] + 2-oxoglutarate + O2 = (3S)-3-hydroxy-L-aspartyl-[ankyrin-repeat domain protein] + succinate + CO2. Its function is as follows. Hydroxylates HIF-1 alpha at 'Asn-799' in the C-terminal transactivation domain (CAD). Functions as an oxygen sensor and, under normoxic conditions, the hydroxylation prevents interaction of HIF-1 with transcriptional coactivators including Cbp/p300-interacting transactivator. Involved in transcriptional repression through interaction with HIF1A, VHL and histone deacetylases. Hydroxylates specific Asn residues within ankyrin repeat domains (ARD) of NFKB1, NFKBIA, NOTCH1, ASB4, PPP1R12A and several other ARD-containing proteins. Also hydroxylates Asp and His residues within ARDs of ANK1 and TNKS2, respectively. Negatively regulates NOTCH1 activity, accelerating myogenic differentiation. Positively regulates ASB4 activity, promoting vascular differentiation. The sequence is that of Hypoxia-inducible factor 1-alpha inhibitor (Hif1an) from Mus musculus (Mouse).